The sequence spans 261 residues: Ribonuclease 3 (261 aa).

In terms of domain architecture, RNase III spans 20 to 144; sequence YFALYRMLGF…FIGAIYLDKG (125 aa). Mg(2+) is bound at residue glutamate 62. Aspartate 66 is a catalytic residue. Mg(2+) is bound by residues asparagine 130 and glutamate 133. Glutamate 133 is a catalytic residue. Residues 172 to 241 form the DRBM domain; the sequence is NFKSKLFEWC…SQMTWRKIRT (70 aa).

The protein belongs to the ribonuclease III family. Homodimer. Requires Mg(2+) as cofactor.

The protein resides in the cytoplasm. It catalyses the reaction Endonucleolytic cleavage to 5'-phosphomonoester.. In terms of biological role, digests double-stranded RNA. Involved in the processing of primary rRNA transcript to yield the immediate precursors to the large and small rRNAs (23S and 16S). Processes some mRNAs, and tRNAs when they are encoded in the rRNA operon. Processes pre-crRNA and tracrRNA of type II CRISPR loci if present in the organism. The sequence is that of Ribonuclease 3 from Azobacteroides pseudotrichonymphae genomovar. CFP2.